The following is a 739-amino-acid chain: Vascular cell adhesion protein 1 (739 aa).

Positions 1–24 (MPRKMVVIFGASNILWMVFAVSQA) are cleaved as a signal peptide. 7 Ig-like C2-type domains span residues 25–105 (SKME…KKLE), 109–212 (QVEI…KERE), 223–309 (PRNT…LIVQ), 312–399 (PFTV…IKVD), 408–506 (EVEM…QTLY), 511–595 (PRDT…VELI), and 600–684 (PKDI…LTLD). Over 25–698 (SKMEIFLEPR…ENNKDYFSPE (674 aa)) the chain is Extracellular. Disulfide bonds link C47–C95, C52–C99, C137–C195, C246–C291, and C335–C383. 2 N-linked (GlcNAc...) asparagine glycosylation sites follow: N76 and N77. The N-linked (GlcNAc...) asparagine glycan is linked to N273. A glycan (N-linked (GlcNAc...) asparagine) is linked at N531. A disulfide bond links C534 and C579. The chain crosses the membrane as a helical span at residues 699-720 (LLVLYCASSLIIPAIGMIIYFA). At 721 to 739 (RRANMKGSYSLVEAQKSKV) the chain is on the cytoplasmic side.

Post-translationally, cleaved by the metalloproteinase ADAM17 to generate the soluble form. Sialoglycoprotein. In terms of processing, ubiquitinated by TRIM65 via 'Lys-48'-linked ubiquitination; leading to proteasomal degradation.

Its subcellular location is the cell membrane. The protein resides in the secreted. In terms of biological role, cell adhesion glycoprotein predominantly expressed on the surface of endothelial cells that plays an important role in immune surveillance and inflammation. Acts as a major regulator of leukocyte adhesion to the endothelium through interaction with different types of integrins. During inflammatory responses, binds ligands on the surface of activated endothelial cells to initiate the activation of calcium channels and the plasma membrane-associated small GTPase RAC1 leading to leukocyte transendothelial migration. Also serves as a quality-control checkpoint for entry into bone marrow by providing a 'don't-eat-me' stamping in the context of major histocompatibility complex (MHC) class-I presentation. The chain is Vascular cell adhesion protein 1 (VCAM1) from Canis lupus familiaris (Dog).